We begin with the raw amino-acid sequence, 190 residues long: Elongation factor P-like protein (190 aa).

This sequence belongs to the elongation factor P family.

This chain is Elongation factor P-like protein, found in Marinomonas sp. (strain MWYL1).